The sequence spans 359 residues: Heme A synthase (359 aa).

Helical transmembrane passes span Ile-8–Gly-28, Leu-94–Lys-114, Leu-124–Ser-144, Gly-159–Ile-179, and Ile-215–Ala-235. His-274 contributes to the heme binding site. 3 helical membrane passes run Trp-276–Asn-296, Met-303–Leu-323, and Ile-328–Ile-348. Heme is bound at residue His-334.

This sequence belongs to the COX15/CtaA family. Type 2 subfamily. Interacts with CtaB. Heme b serves as cofactor.

It localises to the cell membrane. It catalyses the reaction Fe(II)-heme o + 2 A + H2O = Fe(II)-heme a + 2 AH2. It participates in porphyrin-containing compound metabolism; heme A biosynthesis; heme A from heme O: step 1/1. Functionally, catalyzes the conversion of heme O to heme A by two successive hydroxylations of the methyl group at C8. The first hydroxylation forms heme I, the second hydroxylation results in an unstable dihydroxymethyl group, which spontaneously dehydrates, resulting in the formyl group of heme A. This Orientia tsutsugamushi (strain Boryong) (Rickettsia tsutsugamushi) protein is Heme A synthase.